Here is a 320-residue protein sequence, read N- to C-terminus: Undecaprenyl-diphosphatase (320 aa).

Transmembrane regions (helical) follow at residues 9–29 (FVLI…LEVF), 82–102 (GVAF…WYFW), 130–150 (LGIV…KTFI), 161–181 (LGAI…GEKL), 191–211 (LTMQ…IPGV), 236–256 (FLLG…DLLA), 265–285 (LPLI…IAGL), and 296–316 (VFIW…SAGI).

This sequence belongs to the UppP family.

The protein resides in the cell inner membrane. The catalysed reaction is di-trans,octa-cis-undecaprenyl diphosphate + H2O = di-trans,octa-cis-undecaprenyl phosphate + phosphate + H(+). In terms of biological role, catalyzes the dephosphorylation of undecaprenyl diphosphate (UPP). Confers resistance to bacitracin. The protein is Undecaprenyl-diphosphatase of Nostoc sp. (strain PCC 7120 / SAG 25.82 / UTEX 2576).